The chain runs to 187 residues: Threonylcarbamoyl-AMP synthase (187 aa).

Positions 3-187 constitute a YrdC-like domain; it reads QVTPSQISGI…IQTGHIFRQG (185 aa).

Belongs to the SUA5 family. TsaC subfamily.

It localises to the cytoplasm. The catalysed reaction is L-threonine + hydrogencarbonate + ATP = L-threonylcarbamoyladenylate + diphosphate + H2O. Its function is as follows. Required for the formation of a threonylcarbamoyl group on adenosine at position 37 (t(6)A37) in tRNAs that read codons beginning with adenine. Catalyzes the conversion of L-threonine, HCO(3)(-)/CO(2) and ATP to give threonylcarbamoyl-AMP (TC-AMP) as the acyladenylate intermediate, with the release of diphosphate. The polypeptide is Threonylcarbamoyl-AMP synthase (Shewanella amazonensis (strain ATCC BAA-1098 / SB2B)).